We begin with the raw amino-acid sequence, 440 residues long: Thymidine phosphorylase (440 aa).

It belongs to the thymidine/pyrimidine-nucleoside phosphorylase family. In terms of assembly, homodimer.

It catalyses the reaction thymidine + phosphate = 2-deoxy-alpha-D-ribose 1-phosphate + thymine. The protein operates within pyrimidine metabolism; dTMP biosynthesis via salvage pathway; dTMP from thymine: step 1/2. In terms of biological role, the enzymes which catalyze the reversible phosphorolysis of pyrimidine nucleosides are involved in the degradation of these compounds and in their utilization as carbon and energy sources, or in the rescue of pyrimidine bases for nucleotide synthesis. The chain is Thymidine phosphorylase from Klebsiella pneumoniae (strain 342).